A 123-amino-acid polypeptide reads, in one-letter code: Large ribosomal subunit protein uL18 (123 aa).

This sequence belongs to the universal ribosomal protein uL18 family. As to quaternary structure, part of the 50S ribosomal subunit; part of the 5S rRNA/L5/L18/L25 subcomplex. Contacts the 5S and 23S rRNAs.

This is one of the proteins that bind and probably mediate the attachment of the 5S RNA into the large ribosomal subunit, where it forms part of the central protuberance. In Chlamydia muridarum (strain MoPn / Nigg), this protein is Large ribosomal subunit protein uL18.